Here is a 190-residue protein sequence, read N- to C-terminus: Probable nicotinate-nucleotide adenylyltransferase (190 aa).

Belongs to the NadD family.

The catalysed reaction is nicotinate beta-D-ribonucleotide + ATP + H(+) = deamido-NAD(+) + diphosphate. The protein operates within cofactor biosynthesis; NAD(+) biosynthesis; deamido-NAD(+) from nicotinate D-ribonucleotide: step 1/1. Functionally, catalyzes the reversible adenylation of nicotinate mononucleotide (NaMN) to nicotinic acid adenine dinucleotide (NaAD). The sequence is that of Probable nicotinate-nucleotide adenylyltransferase from Staphylococcus saprophyticus subsp. saprophyticus (strain ATCC 15305 / DSM 20229 / NCIMB 8711 / NCTC 7292 / S-41).